Consider the following 470-residue polypeptide: SHUGOSHIN 2 (470 aa).

Residues 72–113 (IQKLRINLRSVQEKNLQLAQANSQMLAELNTNRDRLKDLQHE) are a coiled coil. 2 stretches are compositionally biased toward basic and acidic residues: residues 131–143 (VLPR…KDKV) and 150–162 (GDCK…DIKH). Disordered regions lie at residues 131–176 (VLPR…IKSS) and 358–470 (ESAG…RRKC). The segment covering 163 to 172 (KDTKRKRTTR) has biased composition (basic residues). The segment covering 370–381 (SESRHETKEITR) has biased composition (basic and acidic residues). The span at 382 to 392 (KRSFSTRRQST) shows a compositional bias: basic residues. Composition is skewed to basic and acidic residues over residues 396–406 (SQTDEAIKEIA), 423–438 (TESK…EGMT), and 449–462 (HAAE…EVSL).

Belongs to the shugoshin family.

Functionally, dispensable for both meiotic and mitotic cell cycle progression. Required with SGO1 for full protection of centromeric cohesion during anaphase I. Required to prevent precocious release of pericentromeric cohesins during meiosis. Acts redundantly to SGO1. The chain is SHUGOSHIN 2 from Arabidopsis thaliana (Mouse-ear cress).